The chain runs to 302 residues: Lysosomal thioesterase PPT2 (302 aa).

A signal peptide spans 1-27; that stretch reads MPGLWRQRLPSAWALLLLPFLPLLMPA. N-linked (GlcNAc...) asparagine glycosylation occurs at N60. Disulfide bonds link C109–C117 and C165–C176. S111 serves as the catalytic Nucleophile. N190 and N206 each carry an N-linked (GlcNAc...) asparagine glycan. D228 is a catalytic residue. N245 carries N-linked (GlcNAc...) asparagine glycosylation. A disulfide bridge connects residues C276 and C296. Residue H283 is part of the active site. An N-linked (GlcNAc...) asparagine glycan is attached at N289.

This sequence belongs to the palmitoyl-protein thioesterase family. In terms of tissue distribution, expressed throughout the brain, primarily in neurons, and at lower levels in glial cells.

It localises to the lysosome. It carries out the reaction hexadecanoyl-CoA + H2O = hexadecanoate + CoA + H(+). The enzyme catalyses S-hexadecanoyl-N-acetylcysteamine + H2O = N-acetylcysteamine + hexadecanoate + H(+). In terms of biological role, catalyzes the cleavage of thioester bonds from S-palmitoyl-CoA or S-palmitoyl-N-acetylcysteamine (unbranched structures) but does not have activity against palmitoylcysteine or palmitoylated proteins, branched structures or bulky head groups. Conversely, hydrolyzes both long and short chain fatty acyl-CoA substrate. The polypeptide is Lysosomal thioesterase PPT2 (Ppt2) (Mus musculus (Mouse)).